The sequence spans 227 residues: PKHD-type hydroxylase ACIAD0531 (227 aa).

The 101-residue stretch at 78-178 folds into the Fe2OG dioxygenase domain; it reads HIIPPLFNRY…RFASFFWVQS (101 aa). Fe cation contacts are provided by His-96, Asp-98, and His-159. Arg-169 contacts 2-oxoglutarate.

Requires Fe(2+) as cofactor. The cofactor is L-ascorbate.

This chain is PKHD-type hydroxylase ACIAD0531, found in Acinetobacter baylyi (strain ATCC 33305 / BD413 / ADP1).